Reading from the N-terminus, the 425-residue chain is MAGLDPTLSTSHPFYDVARHGILQVAGDDRQGRRIFTFSCCRLPPLHQLNHQRLLEYLKYTLDQHVENDYTIVYFHYGLSSQNKPSLGWLQNTYKEFDRKYKKNLKALYVVHPTSLIKALWNIFKPLISHKFGKKVTYCSNLRELREHLQCDQLLIPPEVVRYDEKLQNLHKGQPPPPTKTPPPRPPLPTQQFGVSLQYLRDKNQGELIPPVLRWTVTYLREKGLRTEGLFRRSASAQTVRQVQRLYDQGKPVNFDDYGDMHLPAVILKTFLRELPQPLLTFQAYEQILGITSVESSLRVTHCRLILRSLPEHNYAVLRYLMGFLHEVSLESISNKMNSSNLACVFGLNLIWPSQGVASLSALVPLNLFTELLIEYYDKVFSCQEAPGEHTRDTVEVQQAGPVTKEFMKTGTPRASPYLSRLRIS.

Residues 13–168 (PFYDVARHGI…EVVRYDEKLQ (156 aa)) form the CRAL-TRIO domain. The segment at 169–192 (NLHKGQPPPPTKTPPPRPPLPTQQ) is disordered. The segment covering 174 to 189 (QPPPPTKTPPPRPPLP) has biased composition (pro residues). In terms of domain architecture, Rho-GAP spans 195–381 (VSLQYLRDKN…LLIEYYDKVF (187 aa)).

As to expression, highly expressed in skeletal muscle, lung and testis, and at lower levels in kidney, stomach and colon. Not detected in heart, liver, spleen, breast, brain, neonatal head or pancreas.

Its function is as follows. GTPase activator for the Rho-type GTPases by converting them to an inactive GDP-bound state. This is Rho GTPase-activating protein 8 (Arhgap8) from Mus musculus (Mouse).